We begin with the raw amino-acid sequence, 341 residues long: Phosphoribosylformylglycinamidine cyclo-ligase (341 aa).

This sequence belongs to the AIR synthase family.

It localises to the cytoplasm. It carries out the reaction 2-formamido-N(1)-(5-O-phospho-beta-D-ribosyl)acetamidine + ATP = 5-amino-1-(5-phospho-beta-D-ribosyl)imidazole + ADP + phosphate + H(+). It participates in purine metabolism; IMP biosynthesis via de novo pathway; 5-amino-1-(5-phospho-D-ribosyl)imidazole from N(2)-formyl-N(1)-(5-phospho-D-ribosyl)glycinamide: step 2/2. The polypeptide is Phosphoribosylformylglycinamidine cyclo-ligase (Synechocystis sp. (strain ATCC 27184 / PCC 6803 / Kazusa)).